A 143-amino-acid chain; its full sequence is Auxin-responsive protein SAUR67 (143 aa).

This sequence belongs to the ARG7 family.

It is found in the cell membrane. In terms of biological role, may promote auxin-stimulated organ elongation, such as hypocotyls, stamen filaments and petals. This chain is Auxin-responsive protein SAUR67, found in Arabidopsis thaliana (Mouse-ear cress).